The following is a 153-amino-acid chain: 3-hydroxyacyl-[acyl-carrier-protein] dehydratase FabZ (153 aa).

Residue histidine 54 is part of the active site.

The protein belongs to the thioester dehydratase family. FabZ subfamily.

The protein resides in the cytoplasm. The enzyme catalyses a (3R)-hydroxyacyl-[ACP] = a (2E)-enoyl-[ACP] + H2O. Its function is as follows. Involved in unsaturated fatty acids biosynthesis. Catalyzes the dehydration of short chain beta-hydroxyacyl-ACPs and long chain saturated and unsaturated beta-hydroxyacyl-ACPs. This chain is 3-hydroxyacyl-[acyl-carrier-protein] dehydratase FabZ, found in Chlamydia trachomatis serovar L2 (strain ATCC VR-902B / DSM 19102 / 434/Bu).